Here is a 311-residue protein sequence, read N- to C-terminus: MSNQLLDRVVAEIADEMAQRADRGEVASYIPELARVDPKAFGLAVIGADGHIAAAGDADVPFSIQSISKVFTLTLALGKAGDRLWRRVGREPSGSAFNSIVQLEHERGIPRNPFINAGAIAVTDLILSGHQPREALGEILRFMQFLAGDSSIAIDEAVAKSEQRTGFRNAALANYMKSFGVLDNPVEYTLGVYFHHCAIAMSCRQLAMAGRFLAHNGQNPSTGLNVVSSERARRINALMLTCGHYDGSGEFAYRVGLPGKSGVGGGILAVAPGRASIAVWAPGLDAAGNSHLGRVALEGLTKRMGWSIFGV.

Positions 66, 116, 162, 169, 193, 245, and 263 each coordinate substrate.

It belongs to the glutaminase family. In terms of assembly, homotetramer.

The catalysed reaction is L-glutamine + H2O = L-glutamate + NH4(+). The protein is Glutaminase of Rhodopseudomonas palustris (strain ATCC BAA-98 / CGA009).